The chain runs to 470 residues: Acetyl-CoA decarbonylase/synthase complex subunit beta 2 (470 aa).

4 residues coordinate [Ni-Fe-S] cluster: C189, C192, C278, and C280.

This sequence belongs to the CdhC family. As to quaternary structure, monomer. The ACDS complex is made up of alpha, epsilon, beta, gamma and delta chains with a probable stoichiometry of (alpha(2)epsilon(2))(4)-beta(8)-(gamma(1)delta(1))(8) (Potential). [Ni-Fe-S] cluster serves as cofactor.

It carries out the reaction Co(I)-[corrinoid Fe-S protein] + acetyl-CoA + H(+) = methyl-Co(III)-[corrinoid Fe-S protein] + CO + CoA. It participates in one-carbon metabolism; methanogenesis from acetate. Functionally, part of a complex that catalyzes the reversible cleavage of acetyl-CoA, allowing growth on acetate as sole source of carbon and energy. The alpha-epsilon complex generates CO from CO(2), while the beta subunit (this protein) combines the CO with CoA and a methyl group to form acetyl-CoA. The methyl group, which is incorporated into acetyl-CoA, is transferred to the beta subunit by a corrinoid iron-sulfur protein (the gamma-delta complex). This Methanosarcina acetivorans (strain ATCC 35395 / DSM 2834 / JCM 12185 / C2A) protein is Acetyl-CoA decarbonylase/synthase complex subunit beta 2 (cdhC2).